The sequence spans 1295 residues: Phosphoribosylformylglycinamidine synthase (1295 aa).

The tract at residues 305–327 is disordered; sequence WPGAATGSGGEIRDEGATGRGAK. Residues 307-318 and alanine 678 contribute to the ATP site; that span reads GAATGSGGEIRD. Positions 718, 722, and 884 each coordinate Mg(2+). Serine 886 serves as a coordination point for ATP. The 254-residue stretch at 1042–1295 folds into the Glutamine amidotransferase type-1 domain; the sequence is VAVLREQGVN…IFRNARKQLG (254 aa). Cysteine 1135 acts as the Nucleophile in catalysis. Residues histidine 1260 and glutamate 1262 contribute to the active site.

This sequence in the N-terminal section; belongs to the FGAMS family. Monomer.

The protein resides in the cytoplasm. It catalyses the reaction N(2)-formyl-N(1)-(5-phospho-beta-D-ribosyl)glycinamide + L-glutamine + ATP + H2O = 2-formamido-N(1)-(5-O-phospho-beta-D-ribosyl)acetamidine + L-glutamate + ADP + phosphate + H(+). The protein operates within purine metabolism; IMP biosynthesis via de novo pathway; 5-amino-1-(5-phospho-D-ribosyl)imidazole from N(2)-formyl-N(1)-(5-phospho-D-ribosyl)glycinamide: step 1/2. Phosphoribosylformylglycinamidine synthase involved in the purines biosynthetic pathway. Catalyzes the ATP-dependent conversion of formylglycinamide ribonucleotide (FGAR) and glutamine to yield formylglycinamidine ribonucleotide (FGAM) and glutamate. The sequence is that of Phosphoribosylformylglycinamidine synthase from Escherichia coli (strain UTI89 / UPEC).